The sequence spans 59 residues: Large ribosomal subunit protein uL30 (59 aa).

The protein belongs to the universal ribosomal protein uL30 family. Part of the 50S ribosomal subunit.

This Listeria innocua serovar 6a (strain ATCC BAA-680 / CLIP 11262) protein is Large ribosomal subunit protein uL30.